We begin with the raw amino-acid sequence, 745 residues long: MSDKPRRDTGSTGTGSGRSTGQSGSNRAVGAPNPGTGRSPNASTGGNRSAGNQAGNSGRPASAGRNQATTPAPNRNTPPAGARQGGAANARTGTPPVARGGGGGVTPPTGRGGNNPRAARNQPRSRQQPEEREREHVLRRPPPQPAARPVVRPRGPVALPPVMTVRELSEATGIGAADILKAMLKAGMLANINQQIDYETAALIMADFGIETTEDVPEQMAGIVEDVKEVLRAQPPEEMRPRPPVVTIMGHVDHGKTKLLDAIRSTRVAEGEAGGITQHIGAYQIEVNHRKITFLDTPGHEAFTAMRARGAQVTDIVVLVVAADDGVKPQTEEAIAHVKAAGVPMIVAINKIDLPTANPDRIKQQLANVGVIVEEYGGNVPCVHVSARQKINIDGLLEMILLVADLEDLRANPNAPAVGTIIEAKLDKSRGPVATVLIQNGTLHLEDNVLVGCVAGKIKSMFSDSGKRLRHAEPSTPVEIVGLEGVPQAGDILQVMDDLVVAREIALQRQRQQRAEVMAAAARGTSLEELFGKVKQGQVKELNLILKADVQGSLDAIAHLIEQLNQSQQAVQTRIIHRGVGAITEGDVNLALASHAIIIGFNARPDPAARRHAEQHGIDIRFYNIIYQLQDDLKKAMAGMLAPTVKEVVEGYAEVRNTFRLPTREVVAGVYVSDGKITRTGQNVRVLRRGVVIHDGKISSLKRFKDDVREVTAGYECGLIVEGFNDIEVGDALEFYRQETVAASL.

The interval 1–154 (MSDKPRRDTG…PAARPVVRPR (154 aa)) is disordered. The segment covering 36–56 (TGRSPNASTGGNRSAGNQAGN) has biased composition (polar residues). Residues 68 to 98 (ATTPAPNRNTPPAGARQGGAANARTGTPPVA) are compositionally biased toward low complexity. The span at 99–113 (RGGGGGVTPPTGRGG) shows a compositional bias: gly residues. Residues 114–126 (NNPRAARNQPRSR) are compositionally biased toward low complexity. The segment covering 127–138 (QQPEEREREHVL) has biased composition (basic and acidic residues). In terms of domain architecture, tr-type G spans 241–410 (PRPPVVTIMG…LLVADLEDLR (170 aa)). Residues 250–257 (GHVDHGKT) are G1. 250–257 (GHVDHGKT) serves as a coordination point for GTP. The G2 stretch occupies residues 275–279 (GITQH). Residues 296–299 (DTPG) form a G3 region. Residues 296–300 (DTPGH) and 350–353 (NKID) each bind GTP. The segment at 350 to 353 (NKID) is G4. Residues 386–388 (SAR) form a G5 region.

It belongs to the TRAFAC class translation factor GTPase superfamily. Classic translation factor GTPase family. IF-2 subfamily.

The protein resides in the cytoplasm. Its function is as follows. One of the essential components for the initiation of protein synthesis. Protects formylmethionyl-tRNA from spontaneous hydrolysis and promotes its binding to the 30S ribosomal subunits. Also involved in the hydrolysis of GTP during the formation of the 70S ribosomal complex. In Chloroflexus aurantiacus (strain ATCC 29366 / DSM 635 / J-10-fl), this protein is Translation initiation factor IF-2.